A 320-amino-acid chain; its full sequence is Transaldolase (320 aa).

Lys-135 functions as the Schiff-base intermediate with substrate in the catalytic mechanism.

The protein belongs to the transaldolase family. Type 1 subfamily. Homodimer.

Its subcellular location is the cytoplasm. It carries out the reaction D-sedoheptulose 7-phosphate + D-glyceraldehyde 3-phosphate = D-erythrose 4-phosphate + beta-D-fructose 6-phosphate. Its pathway is carbohydrate degradation; pentose phosphate pathway; D-glyceraldehyde 3-phosphate and beta-D-fructose 6-phosphate from D-ribose 5-phosphate and D-xylulose 5-phosphate (non-oxidative stage): step 2/3. In terms of biological role, transaldolase is important for the balance of metabolites in the pentose-phosphate pathway. This Colwellia psychrerythraea (strain 34H / ATCC BAA-681) (Vibrio psychroerythus) protein is Transaldolase.